The sequence spans 355 residues: Putative testis-specific Y-encoded-like protein 3 (355 aa).

The interval 1 to 131 (MADKRAGTPE…GEEKQEVAAE (131 aa)) is disordered. The span at 93-128 (ASEKAEDANKEEGAIFKKEPAEEVEKQQEGEEKQEV) shows a compositional bias: basic and acidic residues.

The protein belongs to the nucleosome assembly protein (NAP) family.

The sequence is that of Putative testis-specific Y-encoded-like protein 3 (TSPY26P) from Homo sapiens (Human).